Consider the following 100-residue polypeptide: Small ribosomal subunit protein uS14c (100 aa).

It belongs to the universal ribosomal protein uS14 family. As to quaternary structure, part of the 30S ribosomal subunit.

Its subcellular location is the plastid. It is found in the chloroplast. In terms of biological role, binds 16S rRNA, required for the assembly of 30S particles. The sequence is that of Small ribosomal subunit protein uS14c from Adiantum capillus-veneris (Maidenhair fern).